A 126-amino-acid polypeptide reads, in one-letter code: Gas vesicle protein J (126 aa).

This sequence belongs to the gas vesicle GvpA family. Interacts with GvpA.

It localises to the gas vesicle. Its function is as follows. A minor component of the gas vesicle, might be involved in nucleating gas vesicle formation. Gas vesicles (GV) are hollow, gas filled proteinaceous nanostructures. During planktonic growth they allow positioning of the organism at a favorable depth for light or nutrient acquisition. The chain is Gas vesicle protein J from Pseudanabaena galeata (strain PCC 6901).